The following is a 357-amino-acid chain: MANNFTTPLAASHGNNCDLYAHHSTARILMPLHYSLVFIIGLVGNLLALVVIVQNRKKINSTTLYSMNLVISDILFTTALPTRIVYYALGFDWRIGDALCRITALLFYINTYAGVNFMTCLSIDRFFAVVHPLRYNKIKRIEYAKGICVFVWILVFAQTLPLLLKPMSKQEADKTTCMEYPNFEGTASLPWILLGACLLGYVLPLAIILLCYSQICCKLFRTAKQNPLTEKSGVNKKALNTIILIIGVFVLCFTPYHVAIMQHMVKTLYAPGALGCGVRHSFQISLHFTVCLMNFNCCMDPFIYFFACKGYKRKVMKMLKRQVSVSISSAVRSAPEENSREMTESQMMIHSKASNGR.

The Extracellular segment spans residues 1–32; it reads MANNFTTPLAASHGNNCDLYAHHSTARILMPL. Residue asparagine 4 is glycosylated (N-linked (GlcNAc...) asparagine). The chain crosses the membrane as a helical span at residues 33 to 53; sequence HYSLVFIIGLVGNLLALVVIV. Residues 54–68 lie on the Cytoplasmic side of the membrane; that stretch reads QNRKKINSTTLYSMN. A helical membrane pass occupies residues 69 to 89; sequence LVISDILFTTALPTRIVYYAL. Arginine 83 provides a ligand contact to 7alpha,25-dihydroxycholesterol. Residues 90–101 are Extracellular-facing; the sequence is GFDWRIGDALCR. Cysteine 100 and cysteine 177 are joined by a disulfide. The helical transmembrane segment at 102 to 122 threads the bilayer; the sequence is ITALLFYINTYAGVNFMTCLS. Tyrosine 108 and tyrosine 112 together coordinate 7alpha,25-dihydroxycholesterol. The tract at residues 122-130 is interaction with G proteins; sequence SIDRFFAVV. The Cytoplasmic segment spans residues 123–143; it reads IDRFFAVVHPLRYNKIKRIEY. The chain crosses the membrane as a helical span at residues 144 to 164; sequence AKGICVFVWILVFAQTLPLLL. Residues 165 to 190 are Extracellular-facing; sequence KPMSKQEADKTTCMEYPNFEGTASLP. Residues 191 to 211 traverse the membrane as a helical segment; that stretch reads WILLGACLLGYVLPLAIILLC. Over 212-240 the chain is Cytoplasmic; that stretch reads YSQICCKLFRTAKQNPLTEKSGVNKKALN. Residues 241–261 traverse the membrane as a helical segment; sequence TIILIIGVFVLCFTPYHVAIM. Residue tyrosine 256 participates in 7alpha,25-dihydroxycholesterol binding. The Extracellular portion of the chain corresponds to 262 to 287; that stretch reads QHMVKTLYAPGALGCGVRHSFQISLH. Residues 288–308 traverse the membrane as a helical segment; sequence FTVCLMNFNCCMDPFIYFFAC. The Cytoplasmic segment spans residues 309-357; the sequence is KGYKRKVMKMLKRQVSVSISSAVRSAPEENSREMTESQMMIHSKASNGR. Phosphoserine is present on residues serine 324 and serine 345. The interval 336–357 is disordered; it reads EENSREMTESQMMIHSKASNGR. Polar residues predominate over residues 344–357; the sequence is ESQMMIHSKASNGR.

This sequence belongs to the G-protein coupled receptor 1 family. Homodimer and heterodimer. Heterodimerizes with CXCR5; leading to modulate the interaction between of CXCL13 and CXCR5.

It localises to the cell membrane. Its function is as follows. G-protein coupled receptor expressed in lymphocytes that acts as a chemotactic receptor for B-cells, T-cells, splenic dendritic cells, monocytes/macrophages and astrocytes. Receptor for oxysterol 7-alpha,25-dihydroxycholesterol (7-alpha,25-OHC) and other related oxysterols. Mediates cell positioning and movement of a number of cells by binding the 7-alpha,25-OHC ligand that forms a chemotactic gradient. Binding of 7-alpha,25-OHC mediates the correct localization of B-cells during humoral immune responses. Guides B-cell movement along the B-cell zone-T-cell zone boundary and later to interfollicular and outer follicular regions. Its specific expression during B-cell maturation helps position B-cells appropriately for mounting T-dependent antibody responses. Collaborates with CXCR5 to mediate B-cell migration; probably by forming a heterodimer with CXCR5 that affects the interaction between of CXCL13 and CXCR5. Also acts as a chemotactic receptor for some T-cells upon binding to 7-alpha,25-OHC ligand. Promotes follicular helper T (Tfh) cells differentiation by positioning activated T-cells at the follicle-T-zone interface, promoting contact of newly activated CD4 T-cells with activated dendritic cells and exposing them to Tfh-cell-promoting inducible costimulator (ICOS) ligand. Expression in splenic dendritic cells is required for their homeostasis, localization and ability to induce B- and T-cell responses: GPR183 acts as a chemotactic receptor in dendritic cells that mediates the accumulation of CD4(+) dendritic cells in bridging channels. Regulates migration of astrocytes and is involved in communication between astrocytes and macrophages. Promotes osteoclast precursor migration to bone surfaces. Signals constitutively through G(i)-alpha, but not G(s)-alpha or G(q)-alpha. Signals constitutively also via MAPK1/3 (ERK1/2). This is G-protein coupled receptor 183 (Gpr183) from Rattus norvegicus (Rat).